The chain runs to 228 residues: Ras-related protein Rab-33B (228 aa).

Positions 41, 42, 43, 44, 45, 46, 60, and 63 each coordinate GTP. Mg(2+) is bound at residue T45. Positions 54-66 match the Switch 1 motif; that stretch reads GRFPQRTEATIGV. Mg(2+) is bound by residues T63 and D86. The Switch 2 signature appears at 87–106; sequence TAGQERFRKSMVQHYYRNVH. GTP contacts are provided by G89, N146, K147, D149, A177, and K178. S-geranylgeranyl cysteine attachment occurs at residues C226 and C228. The residue at position 228 (C228) is a Cysteine methyl ester.

Belongs to the small GTPase superfamily. Rab family. As to quaternary structure, interacts (GTP- and GDP-bound forms) with ATG16L1; the complex consists of a tetramer where two RAB33B molecules bind independently one molecule of the ATG16L1 homodimer; the interaction promotes ATG12-ATG5-ATG16L1 complex recruitment to phagophores. Interacts with ATG16L2; however interaction is approximately hundred times lower than for ATG16L1. Interacts with RIC1 (via C-terminus domain); the interaction is direct with a preference for RAB33B-GTP. Interacts with RGP1. Mg(2+) is required as a cofactor.

The protein localises to the golgi apparatus membrane. It is found in the golgi apparatus. The protein resides in the cis-Golgi network. It localises to the preautophagosomal structure membrane. The catalysed reaction is GTP + H2O = GDP + phosphate + H(+). Regulated by guanine nucleotide exchange factors (GEFs) which promote the exchange of bound GDP for free GTP. Regulated by GTPase activating proteins (GAPs) such as SGSM2 which increase the GTP hydrolysis activity. Inhibited by GDP dissociation inhibitors (GDIs). In terms of biological role, the small GTPases Rab are key regulators of intracellular membrane trafficking, from the formation of transport vesicles to their fusion with membranes. Rabs cycle between an inactive GDP-bound form and an active GTP-bound form that is able to recruit to membranes different sets of downstream effectors directly responsible for vesicle formation, movement, tethering and fusion. RAB33B acts, in coordination with RAB6A, to regulate intra-Golgi retrograde trafficking. Participates in autophagosome formation by recruiting the ATG12-ATG5-ATG16L1 complex to phagophores, probably in a nucleotide-independent manner. The polypeptide is Ras-related protein Rab-33B (RAB33B) (Gallus gallus (Chicken)).